Reading from the N-terminus, the 505-residue chain is Trans-cinnamate 4-monooxygenase (505 aa).

Residues 3–23 (LILLEKSLLAVFFAVIFSIIV) form a helical membrane-spanning segment. (E)-cinnamate is bound by residues 213-218 (RSRLAQ) and Ala-306. Cys-447 contacts heme.

This sequence belongs to the cytochrome P450 family. It depends on heme as a cofactor. Mostly expressed in stems, and, to a lower extent, in bulbs, roots, leaves and flowers.

Its subcellular location is the membrane. It carries out the reaction (E)-cinnamate + reduced [NADPH--hemoprotein reductase] + O2 = (E)-4-coumarate + oxidized [NADPH--hemoprotein reductase] + H2O + H(+). The protein operates within alkaloid biosynthesis. It functions in the pathway phenylpropanoid metabolism; trans-4-coumarate biosynthesis; trans-4-coumarate from trans-cinnamate: step 1/1. In terms of biological role, catalyzes the first oxidative step of the phenylpropanoid pathway in higher plants by transforming trans-cinnamate into p-coumarate. The compounds formed by this pathway are essential components for lignification, pollination, and defense against ultraviolet light, predators and pathogens. Trans-4-coumarate is a precursor to all amaryllidaceae alkaloids such as galanthamine, lycorine and haemanthamine, and including haemanthamine- and crinamine-type alkaloids, promising anticancer agents. This Narcissus pseudonarcissus (Daffodil) protein is Trans-cinnamate 4-monooxygenase.